Consider the following 357-residue polypeptide: Alanine racemase (357 aa).

K33 acts as the Proton acceptor; specific for D-alanine in catalysis. K33 is modified (N6-(pyridoxal phosphate)lysine). Residue R129 coordinates substrate. The Proton acceptor; specific for L-alanine role is filled by Y253. Position 301 (M301) interacts with substrate.

Belongs to the alanine racemase family. Pyridoxal 5'-phosphate is required as a cofactor.

It carries out the reaction L-alanine = D-alanine. Its pathway is amino-acid biosynthesis; D-alanine biosynthesis; D-alanine from L-alanine: step 1/1. Catalyzes the interconversion of L-alanine and D-alanine. May also act on other amino acids. The polypeptide is Alanine racemase (alr) (Pseudomonas entomophila (strain L48)).